The primary structure comprises 1192 residues: Homeodomain-interacting protein kinase 3 (1192 aa).

Lys27 is covalently cross-linked (Glycyl lysine isopeptide (Lys-Gly) (interchain with G-Cter in SUMO); alternate). Lys27 is covalently cross-linked (Glycyl lysine isopeptide (Lys-Gly) (interchain with G-Cter in SUMO2); alternate). Residues 197–525 (YEVLDFLGRG…PIETLNHPFV (329 aa)) form the Protein kinase domain. Residues 203–211 (LGRGTFGQV) and Lys226 each bind ATP. Residue Asp322 is the Proton acceptor of the active site. Tyr359 carries the phosphotyrosine modification. Residues 767-921 (QNRSNSLQNT…NSMSDDEQES (155 aa)) form an interaction with AR region. Positions 775-868 (NTNIPHSAFI…SPRPSLRECK (94 aa)) are interaction with FAS. The interval 799–829 (CVDTQDNHTSEGEAGTCREASVRQDSSVSDK) is disordered. The segment at 832–988 (QTIIIADSPS…ESGLSVDEHM (157 aa)) is required for localization to nuclear speckles. The SUMO interaction motifs (SIM); required for nuclear localization and kinase activity stretch occupies residues 843–895 (AVSVITISSDSDDEETSPRPSLRECKGSLDCEACQSTLNIDRMCSLSSPDSTL). The tract at residues 847–857 (ITISSDSDDEE) is interaction with UBL1. A compositionally biased stretch (low complexity) spans 889-906 (SSPDSTLSTSSSGQSSPS). 2 disordered regions span residues 889 to 943 (SSPD…PFAE) and 956 to 1023 (LGTC…KPAA). Lys1185 participates in a covalent cross-link: Glycyl lysine isopeptide (Lys-Gly) (interchain with G-Cter in SUMO).

Belongs to the protein kinase superfamily. CMGC Ser/Thr protein kinase family. HIPK subfamily. In terms of assembly, interacts with UBL1/SUMO-1. Interacts with and stabilizes ligand-bound androgen receptor (AR). Interacts with Nkx1-2. Interacts with FAS and DAXX. Probably part of a complex consisting of HIPK3, FAS and FADD. Binds to NR5A1/SF1, SPEN/MINT and RUNX2. Autophosphorylated, but autophosphorylation is not required for catalytic activity. In terms of processing, may be sumoylated. As to expression, heart, skeletal muscle, spleen, testis and lung.

It localises to the cytoplasm. It is found in the nucleus. The enzyme catalyses L-seryl-[protein] + ATP = O-phospho-L-seryl-[protein] + ADP + H(+). It catalyses the reaction L-threonyl-[protein] + ATP = O-phospho-L-threonyl-[protein] + ADP + H(+). Functionally, serine/threonine-protein kinase involved in transcription regulation, apoptosis and steroidogenic gene expression. Phosphorylates JUN and RUNX2. Seems to negatively regulate apoptosis by promoting FADD phosphorylation. Enhances androgen receptor-mediated transcription. May act as a transcriptional corepressor for NK homeodomain transcription factors. The phosphorylation of NR5A1 activates SF1 leading to increased steroidogenic gene expression upon cAMP signaling pathway stimulation. In osteoblasts, supports transcription activation: phosphorylates RUNX2 that synergizes with SPEN/MINT to enhance FGFR2-mediated activation of the osteocalcin FGF-responsive element (OCFRE). This chain is Homeodomain-interacting protein kinase 3 (Hipk3), found in Mus musculus (Mouse).